The chain runs to 72 residues: Translation initiation factor IF-1 (72 aa).

The S1-like domain occupies 1-72; the sequence is MAKEELLEFP…TKGRITYRFK (72 aa).

It belongs to the IF-1 family. In terms of assembly, component of the 30S ribosomal translation pre-initiation complex which assembles on the 30S ribosome in the order IF-2 and IF-3, IF-1 and N-formylmethionyl-tRNA(fMet); mRNA recruitment can occur at any time during PIC assembly.

The protein localises to the cytoplasm. Its function is as follows. One of the essential components for the initiation of protein synthesis. Stabilizes the binding of IF-2 and IF-3 on the 30S subunit to which N-formylmethionyl-tRNA(fMet) subsequently binds. Helps modulate mRNA selection, yielding the 30S pre-initiation complex (PIC). Upon addition of the 50S ribosomal subunit IF-1, IF-2 and IF-3 are released leaving the mature 70S translation initiation complex. This is Translation initiation factor IF-1 from Caulobacter vibrioides (strain ATCC 19089 / CIP 103742 / CB 15) (Caulobacter crescentus).